We begin with the raw amino-acid sequence, 518 residues long: Motile sperm domain-containing protein 2 (518 aa).

The Cytoplasmic portion of the chain corresponds to Met1–Gln496. Residues Glu82–Tyr239 enclose the CRAL-TRIO domain. The interval Pro252–Lys308 is disordered. The span at Thr265–Leu279 shows a compositional bias: basic and acidic residues. The MSP domain occupies Leu327 to Val445. A required for FFAT motif binding and phosphorylated FFAT motif binding region spans residues Arg365 to Thr366. A helical; Anchor for type IV membrane protein membrane pass occupies residues Leu497–Ser518.

In terms of assembly, homooligomer. Interacts (via MSP domain) with STARD3NL (via FFAT motif), RMDN3 (via FFAT motif), OSBPL1A (via FFAT motif) and CERT1 (via FFAT motif). Interacts (via MSP domain) with STARD3 (via phosphorylated FFAT motif); this interaction depends on the critical phosphorylation of STARD3 on 'Ser-209'. Interacts with RB1CC1 (via phosphorylated FFAT motif), MIGA2 (via phosphorylated FFAT motif) and OSBPL1A (via FFAT motif). As to expression, highly expressed in CD14(+) monocytes, and at lower levels in neutrophils. Does not show significant expression in B-cells or T-cells.

Its subcellular location is the endoplasmic reticulum membrane. Functionally, endoplasmic reticulum-anchored protein that mediates the formation of contact sites between the endoplasmic (ER) and endosomes, mitochondria or Golgi through interaction with conventional- and phosphorylated-FFAT-containing organelle-bound proteins. In addition, forms endoplasmic reticulum (ER)-lipid droplets (LDs) contacts through a direct protein-membrane interaction and participates in LDs homeostasis. The attachment mechanism involves an amphipathic helix that has an affinity for lipid packing defects present at the surface of LDs. Promotes migration of primary monocytes and neutrophils, in response to various chemokines. The protein is Motile sperm domain-containing protein 2 of Homo sapiens (Human).